The chain runs to 263 residues: Small ribosomal subunit protein eS4 (263 aa).

Residues 42–104 (LPLIIFLRNR…TGEHFRLVYD (63 aa)) form the S4 RNA-binding domain.

Belongs to the eukaryotic ribosomal protein eS4 family. As to quaternary structure, component of the small ribosomal subunit.

The protein resides in the cytoplasm. Functionally, component of the small ribosomal subunit. The ribosome is a large ribonucleoprotein complex responsible for the synthesis of proteins in the cell. This Xenopus laevis (African clawed frog) protein is Small ribosomal subunit protein eS4 (rps4).